The chain runs to 330 residues: Aspartate--ammonia ligase (330 aa).

Belongs to the class-II aminoacyl-tRNA synthetase family. AsnA subfamily.

Its subcellular location is the cytoplasm. It carries out the reaction L-aspartate + NH4(+) + ATP = L-asparagine + AMP + diphosphate + H(+). The protein operates within amino-acid biosynthesis; L-asparagine biosynthesis; L-asparagine from L-aspartate (ammonia route): step 1/1. The polypeptide is Aspartate--ammonia ligase (Photorhabdus laumondii subsp. laumondii (strain DSM 15139 / CIP 105565 / TT01) (Photorhabdus luminescens subsp. laumondii)).